Reading from the N-terminus, the 189-residue chain is Adenylate kinase (189 aa).

12-17 contributes to the ATP binding site; it reads GSGKTT. Residues 33-62 are NMP; sequence STGDLLRAEVASGSELGKLIDGFISKGNLV. AMP contacts are provided by residues Thr-34, Arg-39, 60–62, 87–90, and Gln-94; these read NLV and GYPR. Residues 129–135 form an LID region; that stretch reads GRARGAD. Arg-130 serves as a coordination point for ATP. 2 residues coordinate AMP: Arg-132 and Arg-144. Position 172 (Arg-172) interacts with ATP.

This sequence belongs to the adenylate kinase family. In terms of assembly, monomer.

The protein resides in the cytoplasm. The catalysed reaction is AMP + ATP = 2 ADP. Its pathway is purine metabolism; AMP biosynthesis via salvage pathway; AMP from ADP: step 1/1. Its function is as follows. Catalyzes the reversible transfer of the terminal phosphate group between ATP and AMP. Plays an important role in cellular energy homeostasis and in adenine nucleotide metabolism. The sequence is that of Adenylate kinase from Campylobacter concisus (strain 13826).